The sequence spans 243 residues: Protein DMP8 (243 aa).

A disordered region spans residues 1 to 37 (MEKTEESVGIRVYTTTTTQNPSPTSSRSPKPVPLSSL). A compositionally biased stretch (low complexity) spans 14–29 (TTTTTQNPSPTSSRSP). Helical transmembrane passes span 70-90 (MLVN…LPTI), 98-118 (GINT…CFFF), 174-194 (VNDF…AFSD), and 212-232 (VMES…LVFP).

It belongs to the plant DMP1 protein family. Restricted to flowers.

It is found in the endoplasmic reticulum membrane. The protein resides in the vacuole membrane. Its function is as follows. Involved in membrane remodeling. This Arabidopsis thaliana (Mouse-ear cress) protein is Protein DMP8.